The sequence spans 103 residues: MRELTSEIKKEIRDIVYDFFSEECEVDINELNDNTSVVDDLDGDSLMLIELVDILKKKYSLNIQLQSIGKYLLKNPAETLEKVVQTTYLLYEYENDITNVGEK.

One can recognise a Carrier domain in the interval 3–87 (ELTSEIKKEI…ETLEKVVQTT (85 aa)). Residue Ser-45 is modified to O-(pantetheine 4'-phosphoryl)serine.

In terms of processing, 4'-phosphopantetheine is transferred from CoA to a specific serine of the apo-ACP-like protein.

It is found in the cytoplasm. Its function is as follows. Acyl carrier protein. This chain is Acyl carrier protein homolog, found in Clostridium acetobutylicum (strain ATCC 824 / DSM 792 / JCM 1419 / IAM 19013 / LMG 5710 / NBRC 13948 / NRRL B-527 / VKM B-1787 / 2291 / W).